The following is an 813-amino-acid chain: Molybdenum cofactor sulfurase (813 aa).

Lysine 228 is subject to N6-(pyridoxal phosphate)lysine. The active site involves cysteine 391. Residues 625–670 are disordered; sequence PSLRHAKAHMQKHQGPKRSAAIEKSSAHSFHDPPTPPDSDSENRKR. Positions 628–640 are enriched in basic residues; sequence RHAKAHMQKHQGP. The MOSC domain occupies 648–812; it reads KSSAHSFHDP…IKVGDKVSIG (165 aa).

It belongs to the class-V pyridoxal-phosphate-dependent aminotransferase family. MOCOS subfamily. The cofactor is pyridoxal 5'-phosphate.

The catalysed reaction is Mo-molybdopterin + L-cysteine + AH2 = thio-Mo-molybdopterin + L-alanine + A + H2O. Its function is as follows. Sulfurates the molybdenum cofactor. Sulfation of molybdenum is essential for xanthine dehydrogenase (XDH) and aldehyde oxidase (ADO) enzymes in which molybdenum cofactor is liganded by 1 oxygen and 1 sulfur atom in active form. The polypeptide is Molybdenum cofactor sulfurase (Botryotinia fuckeliana (strain B05.10) (Noble rot fungus)).